The following is a 99-amino-acid chain: MAKGNLNLQDLFLNQLRKEKVNVTIFLLSGFQLKGVIKGFDNFTLVVETENNKQQLIYKHAISSILPSKPINYMAQVQNSQVQNTASQQSNNNQNQESK.

Residues 10-71 (DLFLNQLRKE…ISSILPSKPI (62 aa)) enclose the Sm domain. The segment at 77–99 (VQNSQVQNTASQQSNNNQNQESK) is disordered.

This sequence belongs to the Hfq family. As to quaternary structure, homohexamer.

RNA chaperone that binds small regulatory RNA (sRNAs) and mRNAs to facilitate mRNA translational regulation in response to envelope stress, environmental stress and changes in metabolite concentrations. Also binds with high specificity to tRNAs. This Caldicellulosiruptor saccharolyticus (strain ATCC 43494 / DSM 8903 / Tp8T 6331) protein is RNA-binding protein Hfq.